A 326-amino-acid chain; its full sequence is Protein-ribulosamine 3-kinase, chloroplastic (326 aa).

The transit peptide at 1–30 (MAVASLSICFSARPHLLLRNFSPRPKFVAM) directs the protein to the chloroplast. 125–127 (EFI) contacts ATP. The active-site Proton acceptor is D230.

The protein belongs to the fructosamine kinase family.

It localises to the plastid. It is found in the chloroplast. The enzyme catalyses N(6)-D-ribulosyl-L-lysyl-[protein] + ATP = N(6)-(3-O-phospho-D-ribulosyl)-L-lysyl-[protein] + ADP + H(+). It carries out the reaction N(6)-(D-erythrulosyl)-L-lysyl-[protein] + ATP = N(6)-(3-O-phospho-D-erythrulosyl)-L-lysyl-[protein] + ADP + H(+). Its function is as follows. Initiates a process leading to the deglycation of proteins. Phosphorylates low-molecular-mass and protein-bound erythrulosamines and ribulosamines, but not fructosamines or psicosamines, on the third carbon of the sugar moiety. Protein-bound erythrulosamine 3-phosphates and ribulosamine 3-phosphates are unstable and decompose under physiological conditions. The protein is Protein-ribulosamine 3-kinase, chloroplastic of Arabidopsis thaliana (Mouse-ear cress).